Here is a 111-residue protein sequence, read N- to C-terminus: Ribulose bisphosphate carboxylase small subunit (111 aa).

This sequence belongs to the RuBisCO small chain family. Heterohexadecamer of 8 large and 8 small subunits. The CcmM short form purifies from carboxysomes in complex with both RuBisCO subunits; a second complex with full-length CcmM and RuBisCO also includes carbonic anhydrase (CA, ccaA). RuBisCO-CcmM complexes are probably associated with the carboxysome shell. Isolated reduced and oxidized SSUL1 binds holo-RuBisCO (RbcL(8)-RbcS(8)) but not either subunit octamer alone; RuBisCO has a higher affinity for reduced SSUL1.

The protein localises to the carboxysome. Functionally, ruBisCO catalyzes two reactions: the carboxylation of D-ribulose 1,5-bisphosphate, the primary event in carbon dioxide fixation, as well as the oxidative fragmentation of the pentose substrate in the photorespiration process. Both reactions occur simultaneously and in competition at the same active site. Its function is as follows. Beta-carboxysome assembly initiates when soluble RuBisCO aggregates is condensed into a liquid matrix in a pre-carboxysome by the RbcS-like domains of probably both CcmM58 and CcmM35. CcmN interacts with the N-terminus of CcmM58, and then recruits the CcmK2 major shell protein via CcmN's encapsulation peptide. Shell formation requires CcmK proteins and CcmO. CcmL caps the otherwise elongated carboxysome. Once fully encapsulated carboxysomes are formed, they migrate within the cell probably via interactions with the cytoskeleton. This is Ribulose bisphosphate carboxylase small subunit from Synechococcus elongatus (strain ATCC 33912 / PCC 7942 / FACHB-805) (Anacystis nidulans R2).